The following is a 489-amino-acid chain: 3-octaprenyl-4-hydroxybenzoate carboxy-lyase (489 aa).

Residue Asn172 coordinates Mn(2+). Prenylated FMN contacts are provided by residues 175–177 (IYR), 189–191 (RWL), and 194–195 (RG). A Mn(2+)-binding site is contributed by Glu238. The Proton donor role is filled by Asp287.

Belongs to the UbiD family. Homohexamer. Prenylated FMN is required as a cofactor. The cofactor is Mn(2+).

The protein resides in the cell membrane. The enzyme catalyses a 4-hydroxy-3-(all-trans-polyprenyl)benzoate + H(+) = a 2-(all-trans-polyprenyl)phenol + CO2. The protein operates within cofactor biosynthesis; ubiquinone biosynthesis. Its function is as follows. Catalyzes the decarboxylation of 3-octaprenyl-4-hydroxy benzoate to 2-octaprenylphenol, an intermediate step in ubiquinone biosynthesis. This Salmonella arizonae (strain ATCC BAA-731 / CDC346-86 / RSK2980) protein is 3-octaprenyl-4-hydroxybenzoate carboxy-lyase.